A 386-amino-acid chain; its full sequence is Probable pectin lyase E (386 aa).

Residues 1–16 (MKTAVLSLFLALQTYA) form the signal peptide. Cysteine 77 and cysteine 101 are joined by a disulfide. Asparagine 124 carries N-linked (GlcNAc...) asparagine glycosylation. The active site involves arginine 251. A disulfide bond links cysteine 326 and cysteine 334.

This sequence belongs to the polysaccharide lyase 1 family.

It localises to the secreted. The enzyme catalyses Eliminative cleavage of (1-&gt;4)-alpha-D-galacturonan methyl ester to give oligosaccharides with 4-deoxy-6-O-methyl-alpha-D-galact-4-enuronosyl groups at their non-reducing ends.. In terms of biological role, pectinolytic enzymes consist of four classes of enzymes: pectin lyase, polygalacturonase, pectin methylesterase and rhamnogalacturonase. Among pectinolytic enzymes, pectin lyase is the most important in depolymerization of pectin, since it cleaves internal glycosidic bonds of highly methylated pectins. The protein is Probable pectin lyase E (pelE) of Aspergillus fumigatus (strain CBS 144.89 / FGSC A1163 / CEA10) (Neosartorya fumigata).